Reading from the N-terminus, the 122-residue chain is Large ribosomal subunit protein uL14c (122 aa).

The protein belongs to the universal ribosomal protein uL14 family. As to quaternary structure, part of the 50S ribosomal subunit.

It localises to the plastid. Its subcellular location is the chloroplast. In terms of biological role, binds to 23S rRNA. This is Large ribosomal subunit protein uL14c from Fagopyrum esculentum subsp. ancestrale (Wild buckwheat).